Reading from the N-terminus, the 178-residue chain is ATP-dependent protease subunit HslV (178 aa).

T7 is a catalytic residue. The Na(+) site is built by G162, C165, and T168.

It belongs to the peptidase T1B family. HslV subfamily. A double ring-shaped homohexamer of HslV is capped on each side by a ring-shaped HslU homohexamer. The assembly of the HslU/HslV complex is dependent on binding of ATP.

The protein resides in the cytoplasm. It catalyses the reaction ATP-dependent cleavage of peptide bonds with broad specificity.. With respect to regulation, allosterically activated by HslU binding. Its function is as follows. Protease subunit of a proteasome-like degradation complex believed to be a general protein degrading machinery. In Burkholderia vietnamiensis (strain G4 / LMG 22486) (Burkholderia cepacia (strain R1808)), this protein is ATP-dependent protease subunit HslV.